Here is a 536-residue protein sequence, read N- to C-terminus: Quinate permease (536 aa).

Residues 1–26 are Cytoplasmic-facing; that stretch reads MTLLALKEDRPTPKAVYNWRVYTCAA. Residues 27-47 form a helical membrane-spanning segment; sequence IASFASCMIGYDSSFIGTTLA. Residues 48 to 74 lie on the Extracellular side of the membrane; it reads LPSFTKEFDFASYTPGALALLQSNIVS. Residues 75–95 form a helical membrane-spanning segment; sequence VYQAGAFFGSLFAFATSYFLG. Residues 96-98 lie on the Cytoplasmic side of the membrane; sequence RRR. The chain crosses the membrane as a helical span at residues 99 to 119; sequence SLIAFSVVFIIGAAIMLAADG. The Extracellular portion of the chain corresponds to 120–131; the sequence is QRRGVDPIIAGR. A helical transmembrane segment spans residues 132-152; that stretch reads VLAGIGVGGASNMVPIYISEL. Topologically, residues 153 to 160 are cytoplasmic; the sequence is APPAVRGR. Residues 161 to 181 traverse the membrane as a helical segment; the sequence is LVGIYELGWQIGGLVGFWINY. Over 182–195 the chain is Extracellular; sequence GVNTTMAPTRSQWL. Residue Asn184 is glycosylated (N-linked (GlcNAc...) asparagine). The helical transmembrane segment at 196–216 threads the bilayer; it reads IPFAVQLIPAGLLFLGSFWIP. Residues 217 to 285 lie on the Cytoplasmic side of the membrane; sequence ESPRWLFANG…SLKQPKVRWR (69 aa). The helical transmembrane segment at 286-306 threads the bilayer; that stretch reads FFLGGMLFLWQNGSGINAINY. At 307–327 the chain is on the extracellular side; that stretch reads YSPTVFRSIGITGTNTGFLTT. A helical membrane pass occupies residues 328–349; it reads GIFGVVKMVLTIIWLLWLVDLV. Residues 350 to 352 lie on the Cytoplasmic side of the membrane; that stretch reads GRR. The helical transmembrane segment at 353 to 373 threads the bilayer; the sequence is RILFVGATGGSLCMWFIGAYI. At 374 to 389 the chain is on the extracellular side; sequence KIAGPGTTKTEEAKLT. Residues 390 to 410 form a helical membrane-spanning segment; that stretch reads SGGIAAIFFFYLWTAFYTPSW. The Cytoplasmic portion of the chain corresponds to 411–435; the sequence is NGTPWVINSEMFDQNTRSLGQASAA. A helical transmembrane segment spans residues 436 to 456; sequence ANNWFWNFIISRFTPQMFIKM. The Extracellular portion of the chain corresponds to 457-458; it reads EY. The chain crosses the membrane as a helical span at residues 459 to 479; sequence GVYFFFASLMLLSVVFIYFFI. Over 480 to 536 the chain is Cytoplasmic; that stretch reads PETKSIPLEAMDRLFAIKSVHNANKILMDELNFDRNPEREQSSLDEKDRVTQTENAV. Over residues 516 to 530 the composition is skewed to basic and acidic residues; it reads PEREQSSLDEKDRVT. The disordered stretch occupies residues 516–536; the sequence is PEREQSSLDEKDRVTQTENAV.

It belongs to the major facilitator superfamily. Sugar transporter (TC 2.A.1.1) family.

Its subcellular location is the membrane. The polypeptide is Quinate permease (qa-y) (Neurospora africana).